A 394-amino-acid polypeptide reads, in one-letter code: Venom metalloproteinase antarease TserMP_A (394 aa).

An N-terminal signal peptide occupies residues 1-16 (MISYLASIFLLATVSA). The propeptide occupies 17–157 (VPSGRVEVVF…NAENVSRMAR (141 aa)). The Peptidase M12B domain maps to 162–391 (IVVEYYIVTD…PTASCIFQQC (230 aa)). Cysteine 295 and cysteine 386 are oxidised to a cystine. Histidine 319 is a binding site for Zn(2+). Glutamate 320 is a catalytic residue. Residues histidine 323 and histidine 329 each contribute to the Zn(2+) site.

Zn(2+) serves as cofactor. Post-translationally, contains 4 disulfide bonds. Expressed by the venom gland.

The protein localises to the secreted. With respect to regulation, inhibited by EDTA. Acts as a metalloprotease. Penetrates intact tissue and specifically cleaves the vesicle-associated membrane protein 2 (VAMP2) (part of the SNARE complex) involved in pancreatic secretion, thus disrupting the normal vesicular traffic. This chain is Venom metalloproteinase antarease TserMP_A, found in Tityus serrulatus (Brazilian scorpion).